Here is a 92-residue protein sequence, read N- to C-terminus: Small ribosomal subunit protein bS20 (92 aa).

The interval 1–25 is disordered; that stretch reads MANSAQARKRARQAAKANSHNSALR.

This sequence belongs to the bacterial ribosomal protein bS20 family.

Functionally, binds directly to 16S ribosomal RNA. The polypeptide is Small ribosomal subunit protein bS20 (Burkholderia mallei (strain NCTC 10247)).